The sequence spans 84 residues: UPF0473 protein CLJ_B2791 (84 aa).

Belongs to the UPF0473 family.

The polypeptide is UPF0473 protein CLJ_B2791 (Clostridium botulinum (strain 657 / Type Ba4)).